Reading from the N-terminus, the 297-residue chain is Formylmethanofuran--tetrahydromethanopterin formyltransferase (297 aa).

It belongs to the FTR family. In terms of assembly, homotetramer.

It is found in the cytoplasm. It carries out the reaction N-formylmethanofuran + 5,6,7,8-tetrahydromethanopterin + H(+) = N(5)-formyl-5,6,7,8-tetrahydromethanopterin + methanofuran. It participates in one-carbon metabolism; methanogenesis from CO(2); 5,10-methenyl-5,6,7,8-tetrahydromethanopterin from CO(2): step 2/3. In terms of biological role, catalyzes the reversible transfer of a formyl group from formylmethanofuran (formyl-MFR) to tetrahydromethanopterin (H(4)MPT) to produce 5-formyl tetrahydromethanopterin (5-formyl-H(4)MPT) and methanofuran (MFR). This Methanothermobacter thermautotrophicus (strain ATCC 29096 / DSM 1053 / JCM 10044 / NBRC 100330 / Delta H) (Methanobacterium thermoautotrophicum) protein is Formylmethanofuran--tetrahydromethanopterin formyltransferase.